A 438-amino-acid polypeptide reads, in one-letter code: Proline--tRNA ligase (438 aa).

This sequence belongs to the class-II aminoacyl-tRNA synthetase family. ProS type 2 subfamily. Homodimer.

Its subcellular location is the cytoplasm. It catalyses the reaction tRNA(Pro) + L-proline + ATP = L-prolyl-tRNA(Pro) + AMP + diphosphate. Its function is as follows. Catalyzes the attachment of proline to tRNA(Pro) in a two-step reaction: proline is first activated by ATP to form Pro-AMP and then transferred to the acceptor end of tRNA(Pro). The sequence is that of Proline--tRNA ligase from Rickettsia canadensis (strain McKiel).